The primary structure comprises 119 residues: Holo-[acyl-carrier-protein] synthase (119 aa).

Residues Asp-8 and Glu-59 each contribute to the Mg(2+) site.

This sequence belongs to the P-Pant transferase superfamily. AcpS family. It depends on Mg(2+) as a cofactor.

It localises to the cytoplasm. The catalysed reaction is apo-[ACP] + CoA = holo-[ACP] + adenosine 3',5'-bisphosphate + H(+). Functionally, transfers the 4'-phosphopantetheine moiety from coenzyme A to a Ser of acyl-carrier-protein. The sequence is that of Holo-[acyl-carrier-protein] synthase from Staphylococcus aureus (strain USA300).